A 190-amino-acid polypeptide reads, in one-letter code: Potassium-transporting ATPase KdpC subunit (190 aa).

A helical transmembrane segment spans residues 10–30 (VLFAVLTLICGVIYPYAITGI).

The protein belongs to the KdpC family. The system is composed of three essential subunits: KdpA, KdpB and KdpC.

Its subcellular location is the cell inner membrane. In terms of biological role, part of the high-affinity ATP-driven potassium transport (or Kdp) system, which catalyzes the hydrolysis of ATP coupled with the electrogenic transport of potassium into the cytoplasm. This subunit acts as a catalytic chaperone that increases the ATP-binding affinity of the ATP-hydrolyzing subunit KdpB by the formation of a transient KdpB/KdpC/ATP ternary complex. The chain is Potassium-transporting ATPase KdpC subunit from Herminiimonas arsenicoxydans.